The chain runs to 152 residues: Ubiquitin-conjugating enzyme E2 A (152 aa).

The 147-residue stretch at 4–150 (PARRRLMRDF…VSAIVEQSWR (147 aa)) folds into the UBC core domain. The active-site Glycyl thioester intermediate is Cys-88. At Ser-120 the chain carries Phosphoserine; by CDK9.

It belongs to the ubiquitin-conjugating enzyme family. In terms of assembly, interacts with RAD18 and WAC. Interacts with RFPL4A and CCNB1. Post-translationally, phosphorylation at Ser-120 by CDK9 increases activity towards histone H2B.

The protein localises to the late endosome. It is found in the lysosome. The enzyme catalyses S-ubiquitinyl-[E1 ubiquitin-activating enzyme]-L-cysteine + [E2 ubiquitin-conjugating enzyme]-L-cysteine = [E1 ubiquitin-activating enzyme]-L-cysteine + S-ubiquitinyl-[E2 ubiquitin-conjugating enzyme]-L-cysteine.. It participates in protein modification; protein ubiquitination. Functionally, E2 ubiquitin-conjugating enzyme that accepts ubiquitin from the ubiquitin-activating enzyme E1 and transfers it to a E3 ubiquitin-protein ligase. In vitro catalyzes 'Lys-11', as well as 'Lys-48'-linked polyubiquitination. Together with the E3 enzyme BRE1 (RNF20 and/or RNF40), plays a role in transcription regulation by catalyzing the monoubiquitination of histone H2B at 'Lys-120' to form H2BK120ub1. H2BK120ub1 gives a specific tag for epigenetic transcriptional activation, elongation by RNA polymerase II, telomeric silencing, and is also a prerequisite for H3K4me and H3K79me formation. Involved in mitophagy by acting as a E2 ubiquitin-conjugating enzyme for PRKN. In association with the E3 enzyme UBR4, is involved in N-end rule-dependent protein degradation. In association with the E3 ubiquitin-protein ligase complex SIFI, inhibits the mitochondrial stress response by acting as a E2 ubiquitin-conjugating enzyme for UBR4 and KCMF1. This chain is Ubiquitin-conjugating enzyme E2 A, found in Homo sapiens (Human).